The following is a 259-amino-acid chain: Small ribosomal subunit protein uS2 (259 aa).

It belongs to the universal ribosomal protein uS2 family.

In Streptococcus pneumoniae serotype 4 (strain ATCC BAA-334 / TIGR4), this protein is Small ribosomal subunit protein uS2.